The chain runs to 224 residues: 25 kDa integral membrane protein (224 aa).

Over 1–12 (MKLSFTKVSLTN) the chain is Cytoplasmic. Residues 13–33 (ILILFNCLFIIFSMIVLTFGV) traverse the membrane as a helical segment. At 34–52 (IPQIYLLKFANILHGVRPS) the chain is on the extracellular side. A helical membrane pass occupies residues 53–73 (IFPIVCFTGSFVIIVACVGII). Over 74 to 80 (GLMKGGK) the chain is Cytoplasmic. Residues 81 to 101 (CLLTMHIIALIIATIIDISTA) traverse the membrane as a helical segment. The Extracellular portion of the chain corresponds to 102–189 (TLSAIKQNEF…LNKYVRYYID (88 aa)). A glycan (N-linked (GlcNAc...) asparagine) is linked at asparagine 120. A helical transmembrane segment spans residues 190-210 (ILIYLCFIFGFIKLIYSLFTF). Residues 211–224 (TQRQRIFSEKTPVA) lie on the Cytoplasmic side of the membrane.

It belongs to the tetraspanin (TM4SF) family.

It is found in the membrane. This is 25 kDa integral membrane protein from Schistosoma japonicum (Blood fluke).